A 390-amino-acid chain; its full sequence is NADH-quinone oxidoreductase subunit D (390 aa).

Belongs to the complex I 49 kDa subunit family. NDH-1 is composed of 14 different subunits. Subunits NuoB, C, D, E, F, and G constitute the peripheral sector of the complex.

The protein resides in the cell membrane. The enzyme catalyses a quinone + NADH + 5 H(+)(in) = a quinol + NAD(+) + 4 H(+)(out). In terms of biological role, NDH-1 shuttles electrons from NADH, via FMN and iron-sulfur (Fe-S) centers, to quinones in the respiratory chain. The immediate electron acceptor for the enzyme in this species is believed to be ubiquinone. Couples the redox reaction to proton translocation (for every two electrons transferred, four hydrogen ions are translocated across the cytoplasmic membrane), and thus conserves the redox energy in a proton gradient. This is NADH-quinone oxidoreductase subunit D from Wolbachia pipientis wMel.